The sequence spans 142 residues: Galactose-6-phosphate isomerase subunit LacA (142 aa).

This sequence belongs to the LacAB/RpiB family. In terms of assembly, heteromultimeric protein consisting of LacA and LacB.

It catalyses the reaction aldehydo-D-galactose 6-phosphate = keto-D-tagatose 6-phosphate. It participates in carbohydrate metabolism; D-galactose 6-phosphate degradation; D-tagatose 6-phosphate from D-galactose 6-phosphate: step 1/1. This chain is Galactose-6-phosphate isomerase subunit LacA, found in Streptococcus mutans serotype c (strain ATCC 700610 / UA159).